The following is a 263-amino-acid chain: ATP synthase subunit b 2 (263 aa).

The helical transmembrane segment at 2–22 (LIDPLTVVAQIINFLILVALL) threads the bilayer.

This sequence belongs to the ATPase B chain family. F-type ATPases have 2 components, F(1) - the catalytic core - and F(0) - the membrane proton channel. F(1) has five subunits: alpha(3), beta(3), gamma(1), delta(1), epsilon(1). F(0) has four main subunits: a(1), b(1), b'(1) and c(10-14). The alpha and beta chains form an alternating ring which encloses part of the gamma chain. F(1) is attached to F(0) by a central stalk formed by the gamma and epsilon chains, while a peripheral stalk is formed by the delta, b and b' chains.

It localises to the cellular thylakoid membrane. Its function is as follows. F(1)F(0) ATP synthase produces ATP from ADP in the presence of a proton or sodium gradient. F-type ATPases consist of two structural domains, F(1) containing the extramembraneous catalytic core and F(0) containing the membrane proton channel, linked together by a central stalk and a peripheral stalk. During catalysis, ATP synthesis in the catalytic domain of F(1) is coupled via a rotary mechanism of the central stalk subunits to proton translocation. Component of the F(0) channel, it forms part of the peripheral stalk, linking F(1) to F(0). This is ATP synthase subunit b 2 from Acaryochloris marina (strain MBIC 11017).